A 325-amino-acid chain; its full sequence is Heat-inducible transcription repressor HrcA (325 aa).

The protein belongs to the HrcA family.

Negative regulator of class I heat shock genes (grpE-dnaK-dnaJ and groELS operons). Prevents heat-shock induction of these operons. In Staphylococcus aureus (strain USA300), this protein is Heat-inducible transcription repressor HrcA.